The chain runs to 269 residues: Hydroxyethylthiazole kinase (269 aa).

Met45 provides a ligand contact to substrate. ATP contacts are provided by Arg121 and Thr167. A substrate-binding site is contributed by Gly194.

The protein belongs to the Thz kinase family. Mg(2+) is required as a cofactor.

The enzyme catalyses 5-(2-hydroxyethyl)-4-methylthiazole + ATP = 4-methyl-5-(2-phosphooxyethyl)-thiazole + ADP + H(+). It participates in cofactor biosynthesis; thiamine diphosphate biosynthesis; 4-methyl-5-(2-phosphoethyl)-thiazole from 5-(2-hydroxyethyl)-4-methylthiazole: step 1/1. Catalyzes the phosphorylation of the hydroxyl group of 4-methyl-5-beta-hydroxyethylthiazole (THZ). This Bacillus cereus (strain ATCC 14579 / DSM 31 / CCUG 7414 / JCM 2152 / NBRC 15305 / NCIMB 9373 / NCTC 2599 / NRRL B-3711) protein is Hydroxyethylthiazole kinase.